Here is a 485-residue protein sequence, read N- to C-terminus: Glycogen synthase (485 aa).

An ADP-alpha-D-glucose-binding site is contributed by K15.

It belongs to the glycosyltransferase 1 family. Bacterial/plant glycogen synthase subfamily.

It carries out the reaction [(1-&gt;4)-alpha-D-glucosyl](n) + ADP-alpha-D-glucose = [(1-&gt;4)-alpha-D-glucosyl](n+1) + ADP + H(+). Its pathway is glycan biosynthesis; glycogen biosynthesis. Its function is as follows. Synthesizes alpha-1,4-glucan chains using ADP-glucose. The sequence is that of Glycogen synthase from Thermosipho africanus (strain TCF52B).